Consider the following 215-residue polypeptide: NADH-quinone oxidoreductase subunit C (215 aa).

It belongs to the complex I 30 kDa subunit family. In terms of assembly, NDH-1 is composed of 14 different subunits. Subunits NuoB, C, D, E, F, and G constitute the peripheral sector of the complex.

It is found in the cell inner membrane. It carries out the reaction a quinone + NADH + 5 H(+)(in) = a quinol + NAD(+) + 4 H(+)(out). In terms of biological role, NDH-1 shuttles electrons from NADH, via FMN and iron-sulfur (Fe-S) centers, to quinones in the respiratory chain. The immediate electron acceptor for the enzyme in this species is believed to be ubiquinone. Couples the redox reaction to proton translocation (for every two electrons transferred, four hydrogen ions are translocated across the cytoplasmic membrane), and thus conserves the redox energy in a proton gradient. This chain is NADH-quinone oxidoreductase subunit C, found in Francisella philomiragia subsp. philomiragia (strain ATCC 25017 / CCUG 19701 / FSC 153 / O#319-036).